The following is a 606-amino-acid chain: DNA ligase (606 aa).

Glutamate 263 serves as a coordination point for ATP. The active-site N6-AMP-lysine intermediate is lysine 265. ATP is bound by residues arginine 270, arginine 285, glutamate 315, phenylalanine 355, arginine 432, and lysine 438.

Belongs to the ATP-dependent DNA ligase family. The cofactor is Mg(2+). It depends on Mn(2+) as a cofactor.

It carries out the reaction ATP + (deoxyribonucleotide)n-3'-hydroxyl + 5'-phospho-(deoxyribonucleotide)m = (deoxyribonucleotide)n+m + AMP + diphosphate.. The catalysed reaction is ADP + (deoxyribonucleotide)n-3'-hydroxyl + 5'-phospho-(deoxyribonucleotide)m = (deoxyribonucleotide)n+m + AMP + phosphate.. It catalyses the reaction GTP + (deoxyribonucleotide)n-3'-hydroxyl + 5'-phospho-(deoxyribonucleotide)m = (deoxyribonucleotide)n+m + GMP + diphosphate.. Its function is as follows. DNA ligase that seals nicks in double-stranded DNA during DNA replication, DNA recombination and DNA repair. Can use ATP, ADP and GTP, but not CTP, TTP or NAD(+). This Sulfophobococcus zilligii protein is DNA ligase.